A 265-amino-acid polypeptide reads, in one-letter code: MLAKRVIPCLDVRDGQVVKGVKFRNHEIIGDILPLAKRYAESGADELVFYDITASADGRTVDKSWVERVAREINIPFTVAGGIRSVEHAQTMLSMGADKISINSPALLNPNLINTLVEEFGQQCIVIGIDSFYNEQSGEYEVHQFTGDESKSHKSAWQTKDWLQEVISRGAGEIVLNCMNQDGVRQGYDIAQLSALRGHCSVPLIASGGAGEIQHFVDAFQKAQVDGALAASVFHKNLFSISEVKAAMAANNIAVRPIEALQETT.

Active-site residues include aspartate 11 and aspartate 130.

The protein belongs to the HisA/HisF family. As to quaternary structure, heterodimer of HisH and HisF.

The protein localises to the cytoplasm. The catalysed reaction is 5-[(5-phospho-1-deoxy-D-ribulos-1-ylimino)methylamino]-1-(5-phospho-beta-D-ribosyl)imidazole-4-carboxamide + L-glutamine = D-erythro-1-(imidazol-4-yl)glycerol 3-phosphate + 5-amino-1-(5-phospho-beta-D-ribosyl)imidazole-4-carboxamide + L-glutamate + H(+). It functions in the pathway amino-acid biosynthesis; L-histidine biosynthesis; L-histidine from 5-phospho-alpha-D-ribose 1-diphosphate: step 5/9. In terms of biological role, IGPS catalyzes the conversion of PRFAR and glutamine to IGP, AICAR and glutamate. The HisF subunit catalyzes the cyclization activity that produces IGP and AICAR from PRFAR using the ammonia provided by the HisH subunit. This is Imidazole glycerol phosphate synthase subunit HisF from Idiomarina loihiensis (strain ATCC BAA-735 / DSM 15497 / L2-TR).